A 379-amino-acid chain; its full sequence is Homoserine O-succinyltransferase (379 aa).

An AB hydrolase-1 domain is found at 51 to 360 (NAVLICHALS…DSPYGHDAFL (310 aa)). S157 functions as the Nucleophile in the catalytic mechanism. Position 227 (R227) interacts with substrate. Residues D323 and H356 contribute to the active site. Substrate is bound at residue D357.

It belongs to the AB hydrolase superfamily. MetX family. Homodimer.

It is found in the cytoplasm. The catalysed reaction is L-homoserine + succinyl-CoA = O-succinyl-L-homoserine + CoA. Its pathway is amino-acid biosynthesis; L-methionine biosynthesis via de novo pathway; O-succinyl-L-homoserine from L-homoserine: step 1/1. Its function is as follows. Transfers a succinyl group from succinyl-CoA to L-homoserine, forming succinyl-L-homoserine. The protein is Homoserine O-succinyltransferase of Pseudomonas putida (strain GB-1).